A 108-amino-acid polypeptide reads, in one-letter code: Nucleoid-associated protein Bpet3552 (108 aa).

This sequence belongs to the YbaB/EbfC family. In terms of assembly, homodimer.

The protein resides in the cytoplasm. It localises to the nucleoid. Its function is as follows. Binds to DNA and alters its conformation. May be involved in regulation of gene expression, nucleoid organization and DNA protection. The protein is Nucleoid-associated protein Bpet3552 of Bordetella petrii (strain ATCC BAA-461 / DSM 12804 / CCUG 43448).